A 182-amino-acid polypeptide reads, in one-letter code: NADH-quinone oxidoreductase subunit B (182 aa).

[4Fe-4S] cluster-binding residues include Cys46, Cys47, Cys112, and Cys141.

It belongs to the complex I 20 kDa subunit family. NDH-1 is composed of 14 different subunits. Subunits NuoB, C, D, E, F, and G constitute the peripheral sector of the complex. Requires [4Fe-4S] cluster as cofactor.

The protein resides in the cell inner membrane. It catalyses the reaction a quinone + NADH + 5 H(+)(in) = a quinol + NAD(+) + 4 H(+)(out). Functionally, NDH-1 shuttles electrons from NADH, via FMN and iron-sulfur (Fe-S) centers, to quinones in the respiratory chain. The immediate electron acceptor for the enzyme in this species is believed to be a menaquinone. Couples the redox reaction to proton translocation (for every two electrons transferred, four hydrogen ions are translocated across the cytoplasmic membrane), and thus conserves the redox energy in a proton gradient. This chain is NADH-quinone oxidoreductase subunit B, found in Flavobacterium johnsoniae (strain ATCC 17061 / DSM 2064 / JCM 8514 / BCRC 14874 / CCUG 350202 / NBRC 14942 / NCIMB 11054 / UW101) (Cytophaga johnsonae).